The following is a 103-amino-acid chain: Large ribosomal subunit protein bL21 (103 aa).

This sequence belongs to the bacterial ribosomal protein bL21 family. In terms of assembly, part of the 50S ribosomal subunit. Contacts protein L20.

Functionally, this protein binds to 23S rRNA in the presence of protein L20. This is Large ribosomal subunit protein bL21 from Clostridium botulinum (strain Alaska E43 / Type E3).